Reading from the N-terminus, the 226-residue chain is Leucyl/phenylalanyl-tRNA--protein transferase (226 aa).

It belongs to the L/F-transferase family.

It localises to the cytoplasm. The enzyme catalyses N-terminal L-lysyl-[protein] + L-leucyl-tRNA(Leu) = N-terminal L-leucyl-L-lysyl-[protein] + tRNA(Leu) + H(+). It catalyses the reaction N-terminal L-arginyl-[protein] + L-leucyl-tRNA(Leu) = N-terminal L-leucyl-L-arginyl-[protein] + tRNA(Leu) + H(+). It carries out the reaction L-phenylalanyl-tRNA(Phe) + an N-terminal L-alpha-aminoacyl-[protein] = an N-terminal L-phenylalanyl-L-alpha-aminoacyl-[protein] + tRNA(Phe). In terms of biological role, functions in the N-end rule pathway of protein degradation where it conjugates Leu, Phe and, less efficiently, Met from aminoacyl-tRNAs to the N-termini of proteins containing an N-terminal arginine or lysine. This is Leucyl/phenylalanyl-tRNA--protein transferase from Pseudomonas putida (strain ATCC 47054 / DSM 6125 / CFBP 8728 / NCIMB 11950 / KT2440).